We begin with the raw amino-acid sequence, 380 residues long: O-phospho-L-seryl-tRNA:Cys-tRNA synthase (380 aa).

Residues 86 to 87 (AR), Asn192, and 215 to 217 (SGH) each bind pyridoxal 5'-phosphate. An N6-(pyridoxal phosphate)lysine modification is found at Lys218.

This sequence belongs to the SepCysS family. As to quaternary structure, homodimer. Interacts with SepRS. Requires pyridoxal 5'-phosphate as cofactor.

The catalysed reaction is O-phospho-L-seryl-tRNA(Cys) + hydrogen sulfide + H(+) = L-cysteinyl-tRNA(Cys) + phosphate. Its function is as follows. Converts O-phospho-L-seryl-tRNA(Cys) (Sep-tRNA(Cys)) to L-cysteinyl-tRNA(Cys) (Cys-tRNA(Cys)). The protein is O-phospho-L-seryl-tRNA:Cys-tRNA synthase of Methanococcus maripaludis (strain DSM 14266 / JCM 13030 / NBRC 101832 / S2 / LL).